Here is a 93-residue protein sequence, read N- to C-terminus: Putative defensin-like protein 282 (93 aa).

An N-terminal signal peptide occupies residues 1–25 (MANATSFIALAYLLASALMTTVVLG). 3 disulfides stabilise this stretch: cysteine 51–cysteine 83, cysteine 66–cysteine 90, and cysteine 72–cysteine 92.

This sequence belongs to the DEFL family.

It localises to the secreted. The chain is Putative defensin-like protein 282 from Arabidopsis thaliana (Mouse-ear cress).